The chain runs to 287 residues: Ribonuclease Z (287 aa).

Residues histidine 64, histidine 66, aspartate 68, histidine 69, histidine 124, aspartate 191, and histidine 250 each contribute to the Zn(2+) site. Aspartate 68 serves as the catalytic Proton acceptor.

It belongs to the RNase Z family. In terms of assembly, homodimer. The cofactor is Zn(2+).

The catalysed reaction is Endonucleolytic cleavage of RNA, removing extra 3' nucleotides from tRNA precursor, generating 3' termini of tRNAs. A 3'-hydroxy group is left at the tRNA terminus and a 5'-phosphoryl group is left at the trailer molecule.. Its function is as follows. Zinc phosphodiesterase, which displays some tRNA 3'-processing endonuclease activity. Probably involved in tRNA maturation, by removing a 3'-trailer from precursor tRNA. The protein is Ribonuclease Z of Pyrobaculum aerophilum (strain ATCC 51768 / DSM 7523 / JCM 9630 / CIP 104966 / NBRC 100827 / IM2).